The chain runs to 175 residues: ATP synthase subunit delta (175 aa).

This sequence belongs to the ATPase delta chain family. In terms of assembly, F-type ATPases have 2 components, F(1) - the catalytic core - and F(0) - the membrane proton channel. F(1) has five subunits: alpha(3), beta(3), gamma(1), delta(1), epsilon(1). F(0) has three main subunits: a(1), b(2) and c(10-14). The alpha and beta chains form an alternating ring which encloses part of the gamma chain. F(1) is attached to F(0) by a central stalk formed by the gamma and epsilon chains, while a peripheral stalk is formed by the delta and b chains.

The protein resides in the cell inner membrane. Functionally, f(1)F(0) ATP synthase produces ATP from ADP in the presence of a proton or sodium gradient. F-type ATPases consist of two structural domains, F(1) containing the extramembraneous catalytic core and F(0) containing the membrane proton channel, linked together by a central stalk and a peripheral stalk. During catalysis, ATP synthesis in the catalytic domain of F(1) is coupled via a rotary mechanism of the central stalk subunits to proton translocation. In terms of biological role, this protein is part of the stalk that links CF(0) to CF(1). It either transmits conformational changes from CF(0) to CF(1) or is implicated in proton conduction. The protein is ATP synthase subunit delta of Stenotrophomonas maltophilia (strain R551-3).